We begin with the raw amino-acid sequence, 644 residues long: Chaperone protein HscA (644 aa).

It belongs to the heat shock protein 70 family.

Functionally, chaperone involved in the maturation of iron-sulfur cluster-containing proteins. Has a low intrinsic ATPase activity which is markedly stimulated by HscB. Involved in the maturation of IscU. The polypeptide is Chaperone protein HscA (Yersinia pseudotuberculosis serotype I (strain IP32953)).